A 101-amino-acid polypeptide reads, in one-letter code: Osteocalcin (101 aa).

An N-terminal signal peptide occupies residues 1-19 (MKLAILTVLLLGAAVLCLG). A propeptide spanning residues 20-52 (SKDADHSNSVGESHSSEAFISRQESASFARLKR) is cleaved from the precursor. The 47-residue stretch at 53–99 (SYGNNVGQGAAVGSPLESQREVCELNPDCDELADHIGFQEAYRRFYG) folds into the Gla domain. Ca(2+) contacts are provided by E69, E73, E76, and D82. 4-carboxyglutamate is present on residues E69, E73, and E76. A disulfide bond links C75 and C81.

It belongs to the osteocalcin/matrix Gla protein family. Gamma-carboxyglutamate residues are formed by vitamin K dependent carboxylation by GGCX. These residues are essential for the binding of calcium.

The protein localises to the secreted. Functionally, the carboxylated form is one of the main organic components of the bone matrix, which constitutes 1-2% of the total bone protein. The carboxylated form binds strongly to apatite and calcium. This is Osteocalcin (bglap) from Xenopus laevis (African clawed frog).